We begin with the raw amino-acid sequence, 379 residues long: Alcohol dehydrogenase 3 (379 aa).

Residues cysteine 47, threonine 49, histidine 69, cysteine 99, cysteine 102, cysteine 105, cysteine 113, and cysteine 177 each contribute to the Zn(2+) site. Residues threonine 49 and histidine 69 each coordinate an alcohol. Residue threonine 49 participates in NAD(+) binding. NAD(+) contacts are provided by residues 202–207 (GLGAVG), aspartate 226, lysine 231, threonine 272, valine 295, 295–297 (VGV), phenylalanine 322, and arginine 372.

The protein belongs to the zinc-containing alcohol dehydrogenase family. Homodimer. Requires Zn(2+) as cofactor.

It is found in the cytoplasm. It catalyses the reaction a primary alcohol + NAD(+) = an aldehyde + NADH + H(+). It carries out the reaction a secondary alcohol + NAD(+) = a ketone + NADH + H(+). The protein is Alcohol dehydrogenase 3 (ADH3) of Hordeum vulgare (Barley).